We begin with the raw amino-acid sequence, 226 residues long: Ribonuclease 3 (226 aa).

The RNase III domain occupies 6–128; that stretch reads INRLQRKLGY…LIGGIFLDSD (123 aa). E41 contributes to the Mg(2+) binding site. D45 is a catalytic residue. 2 residues coordinate Mg(2+): D114 and E117. Residue E117 is part of the active site. One can recognise a DRBM domain in the interval 155–225; sequence DPKTRLQEYL…AEQALKQLEL (71 aa).

Belongs to the ribonuclease III family. In terms of assembly, homodimer. Requires Mg(2+) as cofactor.

Its subcellular location is the cytoplasm. It carries out the reaction Endonucleolytic cleavage to 5'-phosphomonoester.. Functionally, digests double-stranded RNA. Involved in the processing of primary rRNA transcript to yield the immediate precursors to the large and small rRNAs (23S and 16S). Processes some mRNAs, and tRNAs when they are encoded in the rRNA operon. Processes pre-crRNA and tracrRNA of type II CRISPR loci if present in the organism. This Yersinia enterocolitica serotype O:8 / biotype 1B (strain NCTC 13174 / 8081) protein is Ribonuclease 3.